Reading from the N-terminus, the 209-residue chain is Uracil phosphoribosyltransferase (209 aa).

5-phospho-alpha-D-ribose 1-diphosphate contacts are provided by residues R79, R104, and 131–139 (DPMLATGNS). Uracil is bound by residues I194 and 199-201 (GDA). A 5-phospho-alpha-D-ribose 1-diphosphate-binding site is contributed by D200.

Belongs to the UPRTase family. The cofactor is Mg(2+).

The catalysed reaction is UMP + diphosphate = 5-phospho-alpha-D-ribose 1-diphosphate + uracil. Its pathway is pyrimidine metabolism; UMP biosynthesis via salvage pathway; UMP from uracil: step 1/1. Its activity is regulated as follows. Allosterically activated by GTP. Catalyzes the conversion of uracil and 5-phospho-alpha-D-ribose 1-diphosphate (PRPP) to UMP and diphosphate. The chain is Uracil phosphoribosyltransferase from Variovorax paradoxus (strain S110).